A 222-amino-acid polypeptide reads, in one-letter code: Sugar fermentation stimulation protein homolog (222 aa).

The protein belongs to the SfsA family.

This is Sugar fermentation stimulation protein homolog from Thermotoga maritima (strain ATCC 43589 / DSM 3109 / JCM 10099 / NBRC 100826 / MSB8).